A 319-amino-acid chain; its full sequence is Cobalamin biosynthesis protein CbiB (319 aa).

A run of 5 helical transmembrane segments spans residues V56–A76, W82–A102, V153–A173, V204–C224, and L296–S316.

Belongs to the CobD/CbiB family.

The protein resides in the cell membrane. The protein operates within cofactor biosynthesis; adenosylcobalamin biosynthesis. Converts cobyric acid to cobinamide by the addition of aminopropanol on the F carboxylic group. However, the true cosubstrate could be (R)-1-amino-2-propanol O-2-phosphate, leading to cobinamide phosphate. The sequence is that of Cobalamin biosynthesis protein CbiB from Salmonella arizonae (strain ATCC BAA-731 / CDC346-86 / RSK2980).